Consider the following 396-residue polypeptide: MSVRLVLAKGREKSLLRRHPWVFSGAVARMEGKASLGETIDIVDHQGKWLARGAYSPASQIRARVWTFDQAESIDIAFFTRRLHQAQQWRDWLAKKDGLDSYRLIAGESDGLPGITIDRFGNFLVLQLLSAGAEYQRAALISALQTQYPECAIYDRSDVAVRKKEGMELTQGPVTGELPPALLPIEEHGMKLLVDIQGGHKTGYYLDQRDSRLATRRYVENQRVLNCFSYTGGFAVSALMGGCRQVVSVDTSQEALDIAKQNVELNKLDLSKAEFVRDDVFKLLRAYRDRREKFDVIVMDPPKFVENKSQLMGACRGYKDINMLAIQLLNPGGVLLTFSCSGLMTTDLFQKIIADAAIDAGRDVQFIEQFRQAADHPVIATYPEGLYLKGFACRVM.

In terms of domain architecture, PUA spans serine 2–phenylalanine 79.

The protein belongs to the methyltransferase superfamily. RlmI family.

The protein resides in the cytoplasm. The enzyme catalyses cytidine(1962) in 23S rRNA + S-adenosyl-L-methionine = 5-methylcytidine(1962) in 23S rRNA + S-adenosyl-L-homocysteine + H(+). Specifically methylates the cytosine at position 1962 (m5C1962) of 23S rRNA. In Citrobacter koseri (strain ATCC BAA-895 / CDC 4225-83 / SGSC4696), this protein is Ribosomal RNA large subunit methyltransferase I.